Consider the following 189-residue polypeptide: Ras-like protein 1 (189 aa).

Position 10–17 (10–17 (GAGGVGKS)) interacts with GTP. The Effector region motif lies at 32 to 40 (YDPTIEDSY). GTP-binding positions include 57 to 61 (DTAGQ) and 116 to 119 (NKCD). Cysteine methyl ester is present on Cys-186. Cys-186 is lipidated: S-geranylgeranyl cysteine. A propeptide spans 187–189 (KML) (removed in mature form).

It belongs to the small GTPase superfamily. Ras family.

The protein resides in the cell membrane. The enzyme catalyses GTP + H2O = GDP + phosphate + H(+). With respect to regulation, alternates between an inactive form bound to GDP and an active form bound to GTP. Activated by a guanine nucleotide-exchange factor (GEF) and inactivated by a GTPase-activating protein (GAP). Ras proteins bind GDP/GTP and possess intrinsic GTPase activity. Plays a role in eye development by regulating cell growth, survival of postmitotic ommatidial cells and differentiation of photoreceptor cells. During larval development, mediates Ptth/tor signaling leading to the production of ecdysone, a hormone required for the initiation of metamorphosis. This is Ras-like protein 1 from Drosophila virilis (Fruit fly).